The chain runs to 533 residues: Zinc finger protein 692 (533 aa).

Disordered stretches follow at residues Ser-124–Leu-251 and Thr-290–Glu-310. Over residues Glu-149–Pro-178 the composition is skewed to basic and acidic residues. A compositionally biased stretch (acidic residues) spans Gln-190–Leu-208. Ser-233 carries the post-translational modification Phosphoserine. Polar residues predominate over residues Thr-290–Asn-305. 5 C2H2-type zinc fingers span residues Met-329–His-354, Phe-360–His-384, Tyr-390–His-412, Leu-418–His-440, and Phe-449–His-472. A Phosphoserine modification is found at Ser-471. The disordered stretch occupies residues Val-478–Ser-533. Residues Ser-481–Ser-492 are compositionally biased toward low complexity. Positions Pro-500–Ser-521 are enriched in polar residues.

This sequence belongs to the krueppel C2H2-type zinc-finger protein family. Post-translationally, phosphorylation at Ser-471 results in loss of DNA-binding activity.

It is found in the nucleus. Functionally, may act as an transcriptional repressor for PCK1 gene expression, in turns may participate in the hepatic gluconeogenesis regulation through the activated AMPK signaling pathway. The polypeptide is Zinc finger protein 692 (Rattus norvegicus (Rat)).